A 757-amino-acid chain; its full sequence is Elongation factor G, mitochondrial (757 aa).

A mitochondrion-targeting transit peptide spans 1 to 39 (MLLVPRVPVVMQGKCGLLKISRPLQGSLSRGFHFSRAHR). Positions 65–346 (QKLRNIGISA…AIVDYLPNPS (282 aa)) constitute a tr-type G domain. GTP is bound by residues 74 to 81 (AHIDSGKT), 145 to 149 (DTPGH), and 199 to 202 (NKMD).

The protein belongs to the TRAFAC class translation factor GTPase superfamily. Classic translation factor GTPase family. EF-G/EF-2 subfamily.

Its subcellular location is the mitochondrion. The protein operates within protein biosynthesis; polypeptide chain elongation. Its function is as follows. Mitochondrial GTPase that catalyzes the GTP-dependent ribosomal translocation step during translation elongation. During this step, the ribosome changes from the pre-translocational (PRE) to the post-translocational (POST) state as the newly formed A-site-bound peptidyl-tRNA and P-site-bound deacylated tRNA move to the P and E sites, respectively. Catalyzes the coordinated movement of the two tRNA molecules, the mRNA and conformational changes in the ribosome. In Candida glabrata (strain ATCC 2001 / BCRC 20586 / JCM 3761 / NBRC 0622 / NRRL Y-65 / CBS 138) (Yeast), this protein is Elongation factor G, mitochondrial.